We begin with the raw amino-acid sequence, 899 residues long: Bifunctional uridylyltransferase/uridylyl-removing enzyme (899 aa).

A uridylyltransferase region spans residues 1–342 (MPQMDPELFD…RAGESGPATP (342 aa)). Residues 343-705 (LNSRFQVRDG…TTQREFEGGT (363 aa)) form a uridylyl-removing region. Residues 461 to 583 (VDAHTLNLIK…VGDQTHLDYL (123 aa)) enclose the HD domain. 2 ACT domains span residues 706 to 784 (QIFI…DEYP) and 816 to 897 (ILEL…SLQI).

The protein belongs to the GlnD family. Requires Mg(2+) as cofactor.

The catalysed reaction is [protein-PII]-L-tyrosine + UTP = [protein-PII]-uridylyl-L-tyrosine + diphosphate. It catalyses the reaction [protein-PII]-uridylyl-L-tyrosine + H2O = [protein-PII]-L-tyrosine + UMP + H(+). Uridylyltransferase (UTase) activity is inhibited by glutamine, while glutamine activates uridylyl-removing (UR) activity. Modifies, by uridylylation and deuridylylation, the PII regulatory proteins (GlnB and homologs), in response to the nitrogen status of the cell that GlnD senses through the glutamine level. Under low glutamine levels, catalyzes the conversion of the PII proteins and UTP to PII-UMP and PPi, while under higher glutamine levels, GlnD hydrolyzes PII-UMP to PII and UMP (deuridylylation). Thus, controls uridylylation state and activity of the PII proteins, and plays an important role in the regulation of nitrogen assimilation and metabolism. This is Bifunctional uridylyltransferase/uridylyl-removing enzyme from Ectopseudomonas mendocina (strain ymp) (Pseudomonas mendocina).